The following is a 209-amino-acid chain: MSAPAIAIIDYDMGNLHSVSKALEVVGARPLISDRPAEIFAADAVVLPGVGAFDPAMARLQERELVPVIEQIIEQGMPFLGICLGLQVLFECSEEGTEPGLGIFAGKVKRFQSEPGLTIPHMGWNQLTLRPSASPLWQHLPPSPWVYFVHSYFVAPEDPSLVAATVCHGQQTVTAAIARNNLFACQFHPEKSGAVGLQLLRNFVALVKD.

Residues 5–209 (AIAIIDYDMG…LRNFVALVKD (205 aa)) form the Glutamine amidotransferase type-1 domain. The Nucleophile role is filled by Cys83. Active-site residues include His188 and Glu190.

Heterodimer of HisH and HisF.

Its subcellular location is the cytoplasm. The catalysed reaction is 5-[(5-phospho-1-deoxy-D-ribulos-1-ylimino)methylamino]-1-(5-phospho-beta-D-ribosyl)imidazole-4-carboxamide + L-glutamine = D-erythro-1-(imidazol-4-yl)glycerol 3-phosphate + 5-amino-1-(5-phospho-beta-D-ribosyl)imidazole-4-carboxamide + L-glutamate + H(+). It carries out the reaction L-glutamine + H2O = L-glutamate + NH4(+). Its pathway is amino-acid biosynthesis; L-histidine biosynthesis; L-histidine from 5-phospho-alpha-D-ribose 1-diphosphate: step 5/9. Its function is as follows. IGPS catalyzes the conversion of PRFAR and glutamine to IGP, AICAR and glutamate. The HisH subunit catalyzes the hydrolysis of glutamine to glutamate and ammonia as part of the synthesis of IGP and AICAR. The resulting ammonia molecule is channeled to the active site of HisF. This Thermosynechococcus vestitus (strain NIES-2133 / IAM M-273 / BP-1) protein is Imidazole glycerol phosphate synthase subunit HisH.